The chain runs to 129 residues: D-ribose pyranase 1 (129 aa).

Residue His-20 is the Proton donor of the active site. Substrate-binding positions include Asp-28, His-96, and 118–120; that span reads YSN.

Belongs to the RbsD / FucU family. RbsD subfamily. As to quaternary structure, homodecamer.

It is found in the cytoplasm. The catalysed reaction is beta-D-ribopyranose = beta-D-ribofuranose. Its pathway is carbohydrate metabolism; D-ribose degradation; D-ribose 5-phosphate from beta-D-ribopyranose: step 1/2. In terms of biological role, catalyzes the interconversion of beta-pyran and beta-furan forms of D-ribose. The polypeptide is D-ribose pyranase 1 (Rubrobacter xylanophilus (strain DSM 9941 / JCM 11954 / NBRC 16129 / PRD-1)).